Reading from the N-terminus, the 264-residue chain is MVKPLPRLRLQGFNNLTKALSFNIYDVCYARTEEERQRYIEYIDEQYDADRLTQILTDVAEIIGANILNIARQDYDPQGASVTILISEEPVIDKKQAGKELISDAVVAHMDKSHITVHTYPETHPQEGIATFRADIDVATCGVISPLKALNYLIESLESDIVIMDYRVRGFTRDVKGRKHYIDHKINSIQQFLAKNVKSRYEMFDVNVYQENIFHTKMHLKDFDLDQYLFEERAKNLSFKERMKIETLLKREIEELFHGRNLSE.

S113 functions as the Schiff-base intermediate with substrate; via pyruvic acid in the catalytic mechanism. Residue S113 is modified to Pyruvic acid (Ser); by autocatalysis. Catalysis depends on H118, which acts as the Proton acceptor; for processing activity. C141 functions as the Proton donor; for catalytic activity in the catalytic mechanism.

Belongs to the prokaryotic AdoMetDC family. Type 2 subfamily. In terms of assembly, heterooctamer of four alpha and four beta chains arranged as a tetramer of alpha/beta heterodimers. Requires pyruvate as cofactor. Is synthesized initially as an inactive proenzyme. Formation of the active enzyme involves a self-maturation process in which the active site pyruvoyl group is generated from an internal serine residue via an autocatalytic post-translational modification. Two non-identical subunits are generated from the proenzyme in this reaction, and the pyruvate is formed at the N-terminus of the alpha chain, which is derived from the carboxyl end of the proenzyme. The post-translation cleavage follows an unusual pathway, termed non-hydrolytic serinolysis, in which the side chain hydroxyl group of the serine supplies its oxygen atom to form the C-terminus of the beta chain, while the remainder of the serine residue undergoes an oxidative deamination to produce ammonia and the pyruvoyl group blocking the N-terminus of the alpha chain.

The catalysed reaction is S-adenosyl-L-methionine + H(+) = S-adenosyl 3-(methylsulfanyl)propylamine + CO2. It functions in the pathway amine and polyamine biosynthesis; S-adenosylmethioninamine biosynthesis; S-adenosylmethioninamine from S-adenosyl-L-methionine: step 1/1. Functionally, catalyzes the decarboxylation of S-adenosylmethionine to S-adenosylmethioninamine (dcAdoMet), the propylamine donor required for the synthesis of the polyamines spermine and spermidine from the diamine putrescine. This is S-adenosylmethionine decarboxylase proenzyme from Xanthomonas euvesicatoria pv. vesicatoria (strain 85-10) (Xanthomonas campestris pv. vesicatoria).